A 158-amino-acid chain; its full sequence is N-acetylgalactosamine-specific phosphotransferase enzyme IIB component 1 (158 aa).

The PTS EIIB type-4 domain occupies 1–158 (MTSPNILLTR…PGDQKEQIPD (158 aa)). Histidine 17 functions as the Pros-phosphohistidine intermediate in the catalytic mechanism.

The protein localises to the cytoplasm. The phosphoenolpyruvate-dependent sugar phosphotransferase system (sugar PTS), a major carbohydrate active -transport system, catalyzes the phosphorylation of incoming sugar substrates concomitantly with their translocation across the cell membrane. This system is involved in N-acetylgalactosamine transport. This chain is N-acetylgalactosamine-specific phosphotransferase enzyme IIB component 1 (agaB), found in Escherichia coli (strain K12).